The chain runs to 498 residues: Glutamate--tRNA ligase (498 aa).

The 'HIGH' region motif lies at 11–21 (PSPTGHLHIGN). A 'KMSKS' region motif is present at residues 260–264 (KLSKR). Residue Lys-263 participates in ATP binding.

It belongs to the class-I aminoacyl-tRNA synthetase family. Glutamate--tRNA ligase type 1 subfamily. In terms of assembly, monomer.

The protein localises to the cytoplasm. It carries out the reaction tRNA(Glu) + L-glutamate + ATP = L-glutamyl-tRNA(Glu) + AMP + diphosphate. Catalyzes the attachment of glutamate to tRNA(Glu) in a two-step reaction: glutamate is first activated by ATP to form Glu-AMP and then transferred to the acceptor end of tRNA(Glu). This chain is Glutamate--tRNA ligase, found in Leuconostoc citreum (strain KM20).